The chain runs to 132 residues: uncharacterized protein (132 aa).

2 consecutive transmembrane segments (helical) span residues 12-32 and 37-57; these read VIGF…KKLY and LTLA…IPVL.

The protein localises to the cell membrane. This is an uncharacterized protein from Methanocaldococcus jannaschii (strain ATCC 43067 / DSM 2661 / JAL-1 / JCM 10045 / NBRC 100440) (Methanococcus jannaschii).